Consider the following 202-residue polypeptide: Outer-membrane lipoprotein carrier protein (202 aa).

A signal peptide spans 1-21 (MKRLLVACCFLSGLISASALA).

This sequence belongs to the LolA family. As to quaternary structure, monomer.

Its subcellular location is the periplasm. Functionally, participates in the translocation of lipoproteins from the inner membrane to the outer membrane. Only forms a complex with a lipoprotein if the residue after the N-terminal Cys is not an aspartate (The Asp acts as a targeting signal to indicate that the lipoprotein should stay in the inner membrane). This chain is Outer-membrane lipoprotein carrier protein, found in Yersinia pestis bv. Antiqua (strain Antiqua).